A 730-amino-acid polypeptide reads, in one-letter code: MGACPPKAKGPWAQLQKLLISWPVGEQDWEQYRDRVNMLQQERIRDSPLLQAAKENDLRLLKILLLNQSCDFQQRGAVGETALHVAALYDNLEAATLLMEAAPELAKEPALCEPFVGQTALHIAVMNQNLNLVRALLARGASVSARATGAAFRRSPHNLIYYGEHPLSFAACVGSEEIVRLLIEHGADIRAQDSLGNTVLHILILQPNKTFACQMYNLLLSYDEHSDHLQSLELVPNHQGLTPFKLAGVEGNTVMFQHLMQKRKHVQWTCGPLTSTLYDLTEIDSWGEELSFLELVVSSKKREARQILEQTPVKELVSFKWKKYGRPYFCVLASLYILYMICFTTCCIYRPLKLRDDNRTDPRDITILQQKLLQEAYVTHQDNIRLVGELVTVTGAVIILLLEIPDIFRVGASRYFGQTILGGPFHVIIITYASLVLLTMVMRLTNMNGEVVPLSFALVLGWCSVMYFARGFQMLGPFTIMIQKMIFGDLMRFCWLMAVVILGFASAFHITFQTEDPNNLGEFSDYPTALFSTFELFLTIIDGPANYSVDLPFMYCITYAAFAIIATLLMLNLFIAMMGDTHWRVAQERDELWRAQVVATTVMLERKMPRFLWPRSGICGYEYGLGDRWFLRVENHHDQNPLRVLRYVEAFKCSDKEDGQEQLSEKRPSTVESGMLSRASVAFQTPSLSRTTSQSSNSHRGWEILRRNTLGHLNLGLDLGEGDGEEVYHF.

Residues 1–327 (MGACPPKAKG…SFKWKKYGRP (327 aa)) are Cytoplasmic-facing. ANK repeat units lie at residues 44 to 74 (IRDS…DFQQ), 78 to 107 (VGET…ELAK), 116 to 145 (VGQT…SVSA), 162 to 191 (YGEH…DIRA), 195 to 228 (LGNT…HSDH), and 239 to 268 (QGLT…HVQW). The chain crosses the membrane as a helical span at residues 328–348 (YFCVLASLYILYMICFTTCCI). At 349–385 (YRPLKLRDDNRTDPRDITILQQKLLQEAYVTHQDNIR) the chain is on the extracellular side. N358 is a glycosylation site (N-linked (GlcNAc...) asparagine). Residues 386–408 (LVGELVTVTGAVIILLLEIPDIF) form a helical membrane-spanning segment. Over 409–419 (RVGASRYFGQT) the chain is Cytoplasmic. Residues 420-442 (ILGGPFHVIIITYASLVLLTMVM) form a helical membrane-spanning segment. Topologically, residues 443–448 (RLTNMN) are extracellular. A helical membrane pass occupies residues 449–469 (GEVVPLSFALVLGWCSVMYFA). The Cytoplasmic segment spans residues 470 to 492 (RGFQMLGPFTIMIQKMIFGDLMR). A helical membrane pass occupies residues 493–513 (FCWLMAVVILGFASAFHITFQ). The segment at residues 524-544 (SDYPTALFSTFELFLTIIDGP) is an intramembrane region (pore-forming). D542 contributes to the Ca(2+) binding site. A helical transmembrane segment spans residues 557–577 (ITYAAFAIIATLLMLNLFIAM). Over 578–730 (MGDTHWRVAQ…EGDGEEVYHF (153 aa)) the chain is Cytoplasmic. An interaction with S100A10 region spans residues 598–602 (VATTV). The interval 650–653 (AFKC) is involved in Ca(2+)-dependent inactivation. At T685 the chain carries Phosphothreonine. At S689 the chain carries Phosphoserine. Positions 701–730 (GWEILRRNTLGHLNLGLDLGEGDGEEVYHF) are involved in Ca(2+)-dependent inactivation.

It belongs to the transient receptor (TC 1.A.4) family. TrpV subfamily. TRPV5 sub-subfamily. As to quaternary structure, homotetramer. Probably forms heterotetramers with TRPV6. Interacts with TRPV6. Interacts with S100A10 and probably with the ANAX2-S100A10 heterotetramer. The interaction with S100A10 is required for the trafficking to the plasma membrane. Interacts with calmodulin. Interacts with BSPRY, which results in its inactivation. In terms of processing, glycosylated. As to expression, detected in kidney cortex, in distal convoluted tubules and cortical collecting ducts (at protein level). Detected in duodenum, jejunum, ileum, kidney and placenta.

It localises to the cell membrane. Its subcellular location is the apical cell membrane. The enzyme catalyses Ca(2+)(in) = Ca(2+)(out). With respect to regulation, activated by WNK3. Constitutively active calcium selective cation channel thought to be involved in Ca(2+) reabsorption in kidney and intestine. Required for normal Ca(2+) reabsorption in the kidney distal convoluted tubules. The channel is activated by low internal calcium level and the current exhibits an inward rectification. A Ca(2+)-dependent feedback regulation includes fast channel inactivation and slow current decay. Heteromeric assembly with TRPV6 seems to modify channel properties. TRPV5-TRPV6 heteromultimeric concatemers exhibit voltage-dependent gating. In Oryctolagus cuniculus (Rabbit), this protein is Transient receptor potential cation channel subfamily V member 5 (Trpv5).